The following is a 465-amino-acid chain: Probable zinc metalloprotease PTT_17836 (465 aa).

The first 20 residues, 1 to 20 (MRSASTLAVCAATLLQIACS), serve as a signal peptide directing secretion. Residue N140 is glycosylated (N-linked (GlcNAc...) asparagine). Zn(2+) is bound by residues H163, D183, and E216. N231 carries N-linked (GlcNAc...) asparagine glycosylation. D243 contributes to the Zn(2+) binding site. Residues N272, N330, N378, N384, N421, and N426 are each glycosylated (N-linked (GlcNAc...) asparagine). The Fibronectin type-III domain maps to 371-464 (APTNVGVNTT…LPFPFGCARN (94 aa)).

This sequence belongs to the peptidase M28 family. M28B subfamily. Zn(2+) serves as cofactor.

It localises to the secreted. This Pyrenophora teres f. teres (strain 0-1) (Barley net blotch fungus) protein is Probable zinc metalloprotease PTT_17836.